We begin with the raw amino-acid sequence, 251 residues long: Triosephosphate isomerase (251 aa).

Substrate is bound at residue 9–11; it reads NWK. His-94 functions as the Electrophile in the catalytic mechanism. The active-site Proton acceptor is Glu-166. Substrate is bound by residues Gly-172, Ser-211, and 232 to 233; that span reads GG.

This sequence belongs to the triosephosphate isomerase family. In terms of assembly, homodimer.

The protein resides in the cytoplasm. The enzyme catalyses D-glyceraldehyde 3-phosphate = dihydroxyacetone phosphate. The protein operates within carbohydrate biosynthesis; gluconeogenesis. It functions in the pathway carbohydrate degradation; glycolysis; D-glyceraldehyde 3-phosphate from glycerone phosphate: step 1/1. Functionally, involved in the gluconeogenesis. Catalyzes stereospecifically the conversion of dihydroxyacetone phosphate (DHAP) to D-glyceraldehyde-3-phosphate (G3P). The polypeptide is Triosephosphate isomerase (Xanthomonas euvesicatoria pv. vesicatoria (strain 85-10) (Xanthomonas campestris pv. vesicatoria)).